The chain runs to 484 residues: Aspartyl/glutamyl-tRNA(Asn/Gln) amidotransferase subunit B (484 aa).

The protein belongs to the GatB/GatE family. GatB subfamily. In terms of assembly, heterotrimer of A, B and C subunits.

The enzyme catalyses L-glutamyl-tRNA(Gln) + L-glutamine + ATP + H2O = L-glutaminyl-tRNA(Gln) + L-glutamate + ADP + phosphate + H(+). The catalysed reaction is L-aspartyl-tRNA(Asn) + L-glutamine + ATP + H2O = L-asparaginyl-tRNA(Asn) + L-glutamate + ADP + phosphate + 2 H(+). In terms of biological role, allows the formation of correctly charged Asn-tRNA(Asn) or Gln-tRNA(Gln) through the transamidation of misacylated Asp-tRNA(Asn) or Glu-tRNA(Gln) in organisms which lack either or both of asparaginyl-tRNA or glutaminyl-tRNA synthetases. The reaction takes place in the presence of glutamine and ATP through an activated phospho-Asp-tRNA(Asn) or phospho-Glu-tRNA(Gln). The protein is Aspartyl/glutamyl-tRNA(Asn/Gln) amidotransferase subunit B of Bordetella pertussis (strain Tohama I / ATCC BAA-589 / NCTC 13251).